The following is a 217-amino-acid chain: Ribosomal RNA small subunit methyltransferase G (217 aa).

S-adenosyl-L-methionine contacts are provided by residues Gly78, Phe83, 129–130 (GE), and Arg146.

Belongs to the methyltransferase superfamily. RNA methyltransferase RsmG family.

The protein resides in the cytoplasm. The enzyme catalyses guanosine(527) in 16S rRNA + S-adenosyl-L-methionine = N(7)-methylguanosine(527) in 16S rRNA + S-adenosyl-L-homocysteine. In terms of biological role, specifically methylates the N7 position of guanine in position 527 of 16S rRNA. The polypeptide is Ribosomal RNA small subunit methyltransferase G (Geobacter sulfurreducens (strain ATCC 51573 / DSM 12127 / PCA)).